The following is a 146-amino-acid chain: Large ribosomal subunit protein uL15 (146 aa).

The disordered stretch occupies residues 1-54; sequence MKLHELRPAAGSKSAPKRVGRGTGSGLGRNAGKGEKGQNARSGGGVRPGFEGGQ. Gly residues-rich tracts occupy residues 21–31 and 42–52; these read RGTGSGLGRNA and SGGGVRPGFEG.

Belongs to the universal ribosomal protein uL15 family. In terms of assembly, part of the 50S ribosomal subunit.

Functionally, binds to the 23S rRNA. This is Large ribosomal subunit protein uL15 from Clostridium perfringens (strain ATCC 13124 / DSM 756 / JCM 1290 / NCIMB 6125 / NCTC 8237 / Type A).